Consider the following 573-residue polypeptide: MSISLLQQERHRYLPKVPDLLRGDFRRVCARRGLSTTAVADYDALRSLFARTYGQPLVNFVNASEKNEDSPMETAPEPRGLRVAIVLSGGQAPGGHNVIAGLFDGLKRWHADSVLIGFLGGPAGVLSGDHIEICADRVDAYRNTGGFDLIGSGRTKIESESQFAAAAQTVTRMALDALVVVGGDDSNTNAALLAEHFVNSGISTKVIGVPKTIDGDLKNEAIETSFGFDTATKTYSELIGNIARDACSARKYWHFIKLMGRSASHIALECALKTQPNVCLISEEVAAQSLTLAQIVQSLCDTIATRAQHGEHFGIVLVPEGLIEFIPEMKALITELNEVMARRAQEFEALDTPDAQRVWIEQALSASARAVFNALPAEISTQLLADRDPHGNVQVSRIDTERLLILQVTERLAQMKQEGTYTGVFSSIAHFFGYEGRCAFPSNFDADYCYTLGLTACLLAVHRFTGYVASVRNLTSSVAEWAVGGVPLTMLMNMERRHGSQKPVIKKALVDLEGMPFRVFSRRRASWALKTSYVYPGAVQYYGPPAVCDEPSVTIRLERPAPAANSSFGHRSS.

Gly90 serves as a coordination point for diphosphate. Asp184 lines the Mg(2+) pocket. Substrate-binding positions include 212 to 214 (TID), 251 to 252 (KY), 259 to 261 (MGR), Glu320, and 434 to 437 (YEGR). The active-site Proton acceptor is the Asp214.

This sequence belongs to the phosphofructokinase type A (PFKA) family. PPi-dependent PFK group II subfamily. Clade 'Long' sub-subfamily. As to quaternary structure, homodimer. It depends on Mg(2+) as a cofactor.

The protein resides in the cytoplasm. The enzyme catalyses beta-D-fructose 6-phosphate + diphosphate = beta-D-fructose 1,6-bisphosphate + phosphate + H(+). Its pathway is carbohydrate degradation; glycolysis; D-glyceraldehyde 3-phosphate and glycerone phosphate from D-glucose: step 3/4. Non-allosteric. In terms of biological role, catalyzes the phosphorylation of D-fructose 6-phosphate, the first committing step of glycolysis. Uses inorganic phosphate (PPi) as phosphoryl donor instead of ATP like common ATP-dependent phosphofructokinases (ATP-PFKs), which renders the reaction reversible, and can thus function both in glycolysis and gluconeogenesis. Consistently, PPi-PFK can replace the enzymes of both the forward (ATP-PFK) and reverse (fructose-bisphosphatase (FBPase)) reactions. The protein is Pyrophosphate--fructose 6-phosphate 1-phosphotransferase of Treponema pallidum (strain Nichols).